A 488-amino-acid polypeptide reads, in one-letter code: GTPase Der (488 aa).

EngA-type G domains are found at residues 3 to 166 (PVVA…AEAM) and 199 to 372 (IKLA…DSAT). GTP-binding positions include 9-16 (GRPNVGKS), 56-60 (DTGGI), 118-121 (NKVD), 205-212 (GKPNVGKS), 252-256 (DTAGV), and 317-320 (NKWD). The KH-like domain occupies 373–457 (RRVSTSMLTR…PIQLRFQEGD (85 aa)). The interval 469–488 (MSQERRRKRALSHIKDRKTK) is disordered. Over residues 473–488 (RRRKRALSHIKDRKTK) the composition is skewed to basic residues.

The protein belongs to the TRAFAC class TrmE-Era-EngA-EngB-Septin-like GTPase superfamily. EngA (Der) GTPase family. As to quaternary structure, associates with the 50S ribosomal subunit.

GTPase that plays an essential role in the late steps of ribosome biogenesis. This chain is GTPase Der, found in Shewanella sp. (strain W3-18-1).